We begin with the raw amino-acid sequence, 33 residues long: Brevinin-2Ef (33 aa).

Cysteine 27 and cysteine 33 are oxidised to a cystine.

In terms of tissue distribution, expressed by the skin glands.

The protein localises to the secreted. Functionally, shows antibacterial activity against representative Gram-negative and Gram-positive bacterial species, and hemolytic activity. This chain is Brevinin-2Ef, found in Pelophylax ridibundus (Marsh frog).